A 127-amino-acid chain; its full sequence is Fluoride-specific ion channel FluC (127 aa).

4 consecutive transmembrane segments (helical) span residues 4–24 (FSIL…RYLV), 38–58 (YGTL…IAAF), 71–91 (VIGL…MDNV), and 104–124 (LNIL…FQLL). Na(+) is bound by residues G78 and T81.

This sequence belongs to the fluoride channel Fluc/FEX (TC 1.A.43) family.

It is found in the cell inner membrane. It carries out the reaction fluoride(in) = fluoride(out). With respect to regulation, na(+) is not transported, but it plays an essential structural role and its presence is essential for fluoride channel function. In terms of biological role, fluoride-specific ion channel. Important for reducing fluoride concentration in the cell, thus reducing its toxicity. The chain is Fluoride-specific ion channel FluC from Vibrio parahaemolyticus serotype O3:K6 (strain RIMD 2210633).